Here is a 490-residue protein sequence, read N- to C-terminus: Dual specificity protein kinase CLK3 (490 aa).

Residues 1 to 138 (MHHCKRYRSP…SKRSSRSVED (138 aa)) form a disordered region. Tyr-7 is subject to Phosphotyrosine. A phosphoserine mark is found at Ser-9, Ser-49, Ser-51, Ser-67, Ser-76, and Ser-78. 2 stretches are compositionally biased toward basic and acidic residues: residues 26 to 56 (YSREHEGRLRYPSRREPPPRRSRSRSHDRIP) and 63 to 76 (EHRDSDTYRCEERS). Over residues 88 to 116 (RSRHRRRSRERAPYRTRKHAHHCHKRRTR) the composition is skewed to basic residues. Low complexity predominate over residues 117–130 (SCSSASSRSQQSSK). Ser-135 bears the Phosphoserine mark. Residues 156–472 (YEIVGNLGEG…LAEALLHPFF (317 aa)) form the Protein kinase domain. ATP contacts are provided by residues 162–170 (LGEGTFGKV) and Lys-186. The Proton acceptor role is filled by Asp-283.

The protein belongs to the protein kinase superfamily. CMGC Ser/Thr protein kinase family. Lammer subfamily. Autophosphorylates on all three types of residues. Present at high levels in testis and ovary. In testis, expression is restricted to elongated, maturing spermatozoa. Also present in spleen, brain, lung and liver (at protein level).

The protein resides in the nucleus. It localises to the cytoplasm. Its subcellular location is the cytoplasmic vesicle. The protein localises to the secretory vesicle. It is found in the acrosome. The catalysed reaction is L-seryl-[protein] + ATP = O-phospho-L-seryl-[protein] + ADP + H(+). It carries out the reaction L-threonyl-[protein] + ATP = O-phospho-L-threonyl-[protein] + ADP + H(+). It catalyses the reaction L-tyrosyl-[protein] + ATP = O-phospho-L-tyrosyl-[protein] + ADP + H(+). Its activity is regulated as follows. Leucettine L41 inhibits its kinase activity and affects the regulation of alternative splicing mediated by phosphorylation of SR proteins. Its function is as follows. Dual specificity kinase acting on both serine/threonine and tyrosine-containing substrates. Phosphorylates serine- and arginine-rich (SR) proteins of the spliceosomal complex. May be a constituent of a network of regulatory mechanisms that enable SR proteins to control RNA splicing and can cause redistribution of SR proteins from speckles to a diffuse nucleoplasmic distribution. Phosphorylates SRSF1 and SRSF3. Regulates the alternative splicing of tissue factor (F3) pre-mRNA in endothelial cells. The chain is Dual specificity protein kinase CLK3 from Mus musculus (Mouse).